A 328-amino-acid chain; its full sequence is Probable cell division protein WhiA (328 aa).

A DNA-binding region (H-T-H motif) is located at residues 276-309 (SLEELGRLADPQMTKDAVAGRIRRLLHMADKKAS).

The protein belongs to the WhiA family.

Its function is as follows. Involved in cell division and chromosome segregation. The chain is Probable cell division protein WhiA from Corynebacterium diphtheriae (strain ATCC 700971 / NCTC 13129 / Biotype gravis).